A 158-amino-acid chain; its full sequence is Ribonucleases P/MRP protein subunit POP6 (158 aa).

The stretch at 51-71 (KNDNIKKSVNKLDKQINMADR) forms a coiled coil.

In terms of assembly, component of nuclear RNase P and RNase MRP complexes. RNase P consists of an RNA moiety and at least 9 protein subunits including POP1, POP3, POP4, POP5, POP6, POP7, POP8, RPP1 and RPR2. RNase MRP complex consists of an RNA moiety and at least 10 protein subunits including POP1, POP3, POP4, POP5, POP6, POP7, POP8, RMP1, RPP1 and SNM1, many of which are shared with the RNase P complex.

The protein resides in the nucleus. It catalyses the reaction Endonucleolytic cleavage of RNA, removing 5'-extranucleotides from tRNA precursor.. Its function is as follows. Component of ribonuclease P, a protein complex that generates mature tRNA molecules by cleaving their 5'-ends. Also a component of RNase MRP, which cleaves pre-rRNA sequences. The sequence is that of Ribonucleases P/MRP protein subunit POP6 (POP6) from Saccharomyces cerevisiae (strain ATCC 204508 / S288c) (Baker's yeast).